Here is a 286-residue protein sequence, read N- to C-terminus: Polyamine aminopropyltransferase (286 aa).

One can recognise a PABS domain in the interval 6 to 239 (PVWIDEVFED…GWWSWLYASD (234 aa)). Gln34 provides a ligand contact to S-methyl-5'-thioadenosine. Residues His65 and Asp89 each coordinate spermidine. Residues Glu109 and 140-141 (DG) each bind S-methyl-5'-thioadenosine. The Proton acceptor role is filled by Asp159. Position 159-162 (159-162 (DGSD)) interacts with spermidine. Position 166 (Pro166) interacts with S-methyl-5'-thioadenosine.

This sequence belongs to the spermidine/spermine synthase family. As to quaternary structure, homodimer or homotetramer. Homodimer.

The protein resides in the cytoplasm. It carries out the reaction S-adenosyl 3-(methylsulfanyl)propylamine + putrescine = S-methyl-5'-thioadenosine + spermidine + H(+). It functions in the pathway amine and polyamine biosynthesis; spermidine biosynthesis; spermidine from putrescine: step 1/1. Functionally, catalyzes the irreversible transfer of a propylamine group from the amino donor S-adenosylmethioninamine (decarboxy-AdoMet) to putrescine (1,4-diaminobutane) to yield spermidine. The protein is Polyamine aminopropyltransferase of Synechococcus elongatus (strain ATCC 33912 / PCC 7942 / FACHB-805) (Anacystis nidulans R2).